The primary structure comprises 250 residues: Carboxy-S-adenosyl-L-methionine synthase (250 aa).

S-adenosyl-L-methionine-binding positions include Tyr-45, 70-72 (GCS), 95-96 (DN), 123-124 (DI), Asn-138, and Arg-205.

It belongs to the class I-like SAM-binding methyltransferase superfamily. Cx-SAM synthase family. In terms of assembly, homodimer.

It carries out the reaction prephenate + S-adenosyl-L-methionine = carboxy-S-adenosyl-L-methionine + 3-phenylpyruvate + H2O. Functionally, catalyzes the conversion of S-adenosyl-L-methionine (SAM) to carboxy-S-adenosyl-L-methionine (Cx-SAM). The protein is Carboxy-S-adenosyl-L-methionine synthase of Marinobacter nauticus (strain ATCC 700491 / DSM 11845 / VT8) (Marinobacter aquaeolei).